Here is a 253-residue protein sequence, read N- to C-terminus: Aminoglycoside nucleotidyltransferase (4') (253 aa).

The tract at residues 1 to 127 is N-terminal domain; the sequence is MNGPIIMTRE…KVYQTAKSVE (127 aa). Residues S39, R42, S49, D50, and E52 each contribute to the ATP site. 2 residues coordinate Mg(2+): D50 and E52. 2 residues coordinate neomycin B: E52 and E67. E67, K74, E76, E141, and E145 together coordinate kanamycin A. The segment at 128–241 is C-terminal domain; that stretch reads AQTFHDAICA…NGIQEWTERH (114 aa). Residues E145, K149, and T187 each contribute to the ATP site. E145 is a Mg(2+) binding site. E145 (proton acceptor) is an active-site residue.

In terms of assembly, homodimer. Mg(2+) serves as cofactor.

The enzyme catalyses amikacin + ATP = 4'-adenylylamikacin + diphosphate. It catalyses the reaction kanamycin A + ATP = 4'-adenylylkanamycin A + diphosphate. The catalysed reaction is neomycin B + ATP = 4'-adenylylneomycin B + diphosphate. It carries out the reaction paromomycin + ATP = 4'-adenylylparomomycin + diphosphate. The enzyme catalyses ribostamycin + ATP = 4'-adenylylribostamycin + diphosphate. It catalyses the reaction tobramycin + ATP = 4'-adenylyltobramycin + diphosphate. The catalysed reaction is kanamycin A + CTP = 4'-cytidylylkanamycin A + diphosphate. It carries out the reaction kanamycin A + GTP = 4'-guanylylkanamycin A + diphosphate. The enzyme catalyses kanamycin A + ITP = 4'-inosinylylkanamycin A + diphosphate. It catalyses the reaction dTTP + kanamycin A = 4'-thymidylylkanamycin A + diphosphate. The catalysed reaction is kanamycin A + UTP = 4'-uridylylkanamycin A + diphosphate. It carries out the reaction kanamycin A + dATP = 4'-(2'-deoxyadenylyl)kanamycin A + diphosphate. The enzyme catalyses kanamycin A + dCTP = 4'-(2'-deoxycytidylyl)kanamycin A + diphosphate. It catalyses the reaction kanamycin A + dGTP = 4'-(2'-deoxyguanylyl)kanamycin A + diphosphate. The catalysed reaction is dUTP + kanamycin A = 4'-(2'-deoxyuridylyl)kanamycin A + diphosphate. It carries out the reaction amikacin + GTP = 4'-guanylylamikacin + diphosphate. The enzyme catalyses amikacin + ITP = 4'-inosinylylamikacin + diphosphate. It catalyses the reaction amikacin + CTP = 4'-cytidylylamikacin + diphosphate. The catalysed reaction is amikacin + UTP = 4'-uridylylamikacin + diphosphate. It carries out the reaction amikacin + dTTP = 4'-thymidylylamikacin + diphosphate. In terms of biological role, inactivates aminoglycoside antibiotics such as kanamycin by catalyzing the transfer of a nucleotidyl group from a wide variety of nucleoside triphosphates ((d)ATP, (d)CTP, (d)GTP, ITP, TTP and (d)UTP) to the 4'-hydroxyl group of the aminoglycoside. In vitro, antibiotics without the 4'-hydroxyl but possessing a 4''-hydroxyl group (e.g. sisomicin and gentamicin) are also modifed but with poor specificity. The 3' position of the NTP ribose ring does not tolerate large substitutions (e.g. ddATP) and dNTPs and TTP are better substrates than their NTP counterparts. A short (2.35 Angstrom) hydrogen bond initially facilitates tight binding of the substrate (between Glu-52 and antibiotic) that is subsequently disrupted by the assembly of the active ternary complex. This enables the release of products post-catalysis, a 'catch and release' mechanism. The sequence is that of Aminoglycoside nucleotidyltransferase (4') (knt) from Staphylococcus aureus.